Here is a 185-residue protein sequence, read N- to C-terminus: Peptidyl-tRNA hydrolase (185 aa).

Y14 lines the tRNA pocket. The Proton acceptor role is filled by H19. TRNA-binding residues include F64, N66, and N112.

The protein belongs to the PTH family. Monomer.

The protein resides in the cytoplasm. It catalyses the reaction an N-acyl-L-alpha-aminoacyl-tRNA + H2O = an N-acyl-L-amino acid + a tRNA + H(+). Hydrolyzes ribosome-free peptidyl-tRNAs (with 1 or more amino acids incorporated), which drop off the ribosome during protein synthesis, or as a result of ribosome stalling. Its function is as follows. Catalyzes the release of premature peptidyl moieties from peptidyl-tRNA molecules trapped in stalled 50S ribosomal subunits, and thus maintains levels of free tRNAs and 50S ribosomes. The chain is Peptidyl-tRNA hydrolase from Lactobacillus gasseri (strain ATCC 33323 / DSM 20243 / BCRC 14619 / CIP 102991 / JCM 1131 / KCTC 3163 / NCIMB 11718 / NCTC 13722 / AM63).